A 775-amino-acid polypeptide reads, in one-letter code: Mitochondrial 15S rRNA processing factor CCM1 (775 aa).

The transit peptide at 1–18 directs the protein to the mitochondrion; sequence MLRYARTVRFSQVGNSVR. The interval 35-65 is disordered; it reads HDRKSPSHSLSPISNLPNHNDSSTERARKTL. The segment covering 41–55 has biased composition (polar residues); sequence SHSLSPISNLPNHND. Residues 56–65 are compositionally biased toward basic and acidic residues; it reads SSTERARKTL. 5 PPR repeats span residues 289–323, 324–355, 362–396, 397–432, and 433–467; these read PKRT…KIEI, SGMA…MRFQ, GTRA…KIEP, NQQI…NWTP, and TLPT…NTVS.

Belongs to the CCM1 family. Binds to mitochondrial small subunit 15S rRNA.

The protein resides in the mitochondrion. Regulates mitochondrial small subunit maturation by controlling 15S rRNA 5'-end processing. Localizes to the 5' precursor of the 15S rRNA in a position that is subsequently occupied by mS47 in the mature yeast mtSSU. Uses structure and sequence-specific RNA recognition, binding to a single-stranded region of the precursor and specifically recognizing bases -6 to -1. The exchange of Ccm1 for mS47 is coupled to the irreversible removal of precursor rRNA that is accompanied by conformational changes of the mitoribosomal proteins uS5m and mS26. These conformational changes signal completion of 5'-end rRNA processing through protection of the mature 5'-end of the 15S rRNA and stabilization of mS47. The removal of the 5' precursor together with the dissociation of Ccm1 may be catalyzed by the 5'-3' exoribonuclease Pet127. Involved in the specific removal of group I introns in mitochondrial encoded transcripts. In Scheffersomyces stipitis (strain ATCC 58785 / CBS 6054 / NBRC 10063 / NRRL Y-11545) (Yeast), this protein is Mitochondrial 15S rRNA processing factor CCM1 (CCM1).